Reading from the N-terminus, the 321-residue chain is Serine/threonine-protein phosphatase PP1 isozyme 4 (321 aa).

An N-acetylalanine modification is found at A2. Residues D74, H76, D102, and N134 each coordinate Mn(2+). The Proton donor role is filled by H135. H183 and H258 together coordinate Mn(2+).

It belongs to the PPP phosphatase family. PP-1 subfamily. In terms of assembly, interacts with the DELLA proteins RGA and GAI. Interacts with PIF3 and PIF5. Interacts with the auxin efflux carrier PIN1. Mn(2+) is required as a cofactor. As to expression, expressed in the vasculature of roots and cotyledons, tips of leaves, guard cells, bases of trichomes, pistils and stamen filaments.

Its subcellular location is the nucleus. The protein localises to the cytoplasm. It catalyses the reaction O-phospho-L-seryl-[protein] + H2O = L-seryl-[protein] + phosphate. The catalysed reaction is O-phospho-L-threonyl-[protein] + H2O = L-threonyl-[protein] + phosphate. Phosphatase activity is strongly reduced by the protein phosphatase inhibitor 2 (I-2). Functionally, serine/threonine-protein phosphatase that possesses phosphatase activity toward para-nitrophenyl phosphate (pNPP) in vitro. Acts as a positive regulator in the gibberellin (GA) signaling pathway to regulate plant growth and development. Promotes the GA-induced and proteasomal-dependent degradation of the DELLA proteins RGA and GAI by directly binding and dephosphorylating these proteins. Involved in the regulation of phytochrome B (phyB) signaling pathway that controls photomorphogenesis. Promotes the proteasomal-dependent degradation of PIF5 factor by directly binding and dephosphorylating this protein. Involved in the regulation of pavement cell (PC) interdigitation by modulating the auxin efflux carrier PIN1 polarity and endocytic trafficking. Regulates PIN1 polar targeting through direct binding and dephosphorylation. Acts antagonistically with PID in regulating PC development. The sequence is that of Serine/threonine-protein phosphatase PP1 isozyme 4 from Arabidopsis thaliana (Mouse-ear cress).